A 955-amino-acid polypeptide reads, in one-letter code: Protein translocase subunit SecA (955 aa).

ATP-binding positions include Gln87, 105-109, and Asp494; that span reads GEGKT. The segment at 861–955 is disordered; that stretch reads ASPAPAAPRP…KKAPRTKRKR (95 aa). The span at 874–888 shows a compositional bias: low complexity; that stretch reads QEAAQQAQGTAAPSA. Over residues 943-955 the composition is skewed to basic residues; that stretch reads SKGKKAPRTKRKR.

This sequence belongs to the SecA family. Monomer and homodimer. Part of the essential Sec protein translocation apparatus which comprises SecA, SecYEG and auxiliary proteins SecDF. Other proteins may also be involved.

It localises to the cell membrane. The protein localises to the cytoplasm. It carries out the reaction ATP + H2O + cellular proteinSide 1 = ADP + phosphate + cellular proteinSide 2.. Functionally, part of the Sec protein translocase complex. Interacts with the SecYEG preprotein conducting channel. Has a central role in coupling the hydrolysis of ATP to the transfer of proteins into and across the cell membrane, serving as an ATP-driven molecular motor driving the stepwise translocation of polypeptide chains across the membrane. In Rhodococcus jostii (strain RHA1), this protein is Protein translocase subunit SecA.